We begin with the raw amino-acid sequence, 220 residues long: Adenylate kinase (220 aa).

10–15 (GAGKGT) lines the ATP pocket. The segment at 30–59 (STGDMLRAAVKAGTPLGLKAKEVMDGGNLV) is NMP. AMP is bound by residues Thr31, Arg36, 57–59 (NLV), 85–88 (GFPR), and Gln92. The segment at 122-159 (GRRVHPASGRTYHIRFNPPQTAGMDDETGEPLVQRADD) is LID. Residues Arg123 and 132-133 (TY) each bind ATP. Residues Arg156 and Arg167 each contribute to the AMP site. Residue Gly205 coordinates ATP.

The protein belongs to the adenylate kinase family. In terms of assembly, monomer.

The protein resides in the cytoplasm. It catalyses the reaction AMP + ATP = 2 ADP. It participates in purine metabolism; AMP biosynthesis via salvage pathway; AMP from ADP: step 1/1. Functionally, catalyzes the reversible transfer of the terminal phosphate group between ATP and AMP. Plays an important role in cellular energy homeostasis and in adenine nucleotide metabolism. This Chlorobium luteolum (strain DSM 273 / BCRC 81028 / 2530) (Pelodictyon luteolum) protein is Adenylate kinase.